Reading from the N-terminus, the 333-residue chain is Olfactory receptor 9S13 (333 aa).

Residues 1–35 lie on the Extracellular side of the membrane; the sequence is MATAVHRNGSLTPVSLRVFVLVGFGGGALTQALLF. Asn8 is a glycosylation site (N-linked (GlcNAc...) asparagine). A helical transmembrane segment spans residues 36–56; that stretch reads AVFLVLYVVTVLGNLTMIVVI. Over 57–72 the chain is Cytoplasmic; it reads TLDARLHSPMYFFLKN. Residues 73-93 form a helical membrane-spanning segment; it reads LSFVDLCYSSAIAPNALANFL. Residues 94 to 106 lie on the Extracellular side of the membrane; it reads STSKVISFEACAT. Cys104 and Cys196 are oxidised to a cystine. A helical transmembrane segment spans residues 107–127; the sequence is QFFFFSLLATTETFLLAVMAY. At 128–150 the chain is on the cytoplasmic side; the sequence is DRFMAICSPLRYPVTMCPTTCTR. The chain crosses the membrane as a helical span at residues 151 to 171; the sequence is LVLGTFCVGCLNSIVQTSLTF. Residues 172-203 lie on the Extracellular side of the membrane; sequence QLPFCSSNRIDHFYCDVPPLLQLACASTALNE. Residues 204-224 traverse the membrane as a helical segment; that stretch reads LFLFGLCGFIIVSTTLAVLVS. The Cytoplasmic portion of the chain corresponds to 225 to 251; that stretch reads YGYITVTILRMHSGSGRHKVFSTCGSH. A helical membrane pass occupies residues 252 to 272; that stretch reads LTAVSLFYGTLFVMYAQPGAL. Topologically, residues 273–278 are extracellular; sequence TSMEQG. The helical transmembrane segment at 279 to 299 threads the bilayer; sequence KVVSIFYTLVIPMLNPLIYSL. The Cytoplasmic segment spans residues 300 to 333; sequence RNKDVKDALQRLGQRHSLVKAVRGCPAAGGNASV.

The protein belongs to the G-protein coupled receptor 1 family.

Its subcellular location is the cell membrane. In terms of biological role, odorant receptor. The chain is Olfactory receptor 9S13 from Mus musculus (Mouse).